A 326-amino-acid polypeptide reads, in one-letter code: D-threonate 4-phosphate dehydrogenase (326 aa).

2 residues coordinate substrate: histidine 138 and threonine 139. 3 residues coordinate a divalent metal cation: histidine 168, histidine 212, and histidine 267. The substrate site is built by lysine 275, asparagine 284, and arginine 293.

This sequence belongs to the PdxA family. PdxA2 subfamily. In terms of assembly, homodimer. The cofactor is a divalent metal cation.

The catalysed reaction is 4-O-phospho-D-threonate + NAD(+) = dihydroxyacetone phosphate + CO2 + NADH. Its function is as follows. Catalyzes the NAD-dependent oxidation and subsequent decarboxylation of D-threonate 4-phosphate to produce dihydroxyacetone phosphate (DHAP). Can also use 4-hydroxy-L-threonine 4-phosphate as substrate. The protein is D-threonate 4-phosphate dehydrogenase of Pectobacterium atrosepticum (strain SCRI 1043 / ATCC BAA-672) (Erwinia carotovora subsp. atroseptica).